The sequence spans 562 residues: MDNGVETPQGQKTQPINLPPVRKKLRKHEGLGKGVKRKLFAEDSSPLKKQISACSDMETLSSPVKSECESRSASLDESFGKCKHEIACDCSAIEELLCHESLLDSPMKLSNAHTIFSSNKWKLELEKIIASKQIFLDMSENAELAAYGETLCNLRIFEKISSPFLFDVQSEERSYSVVYVPHNKELCGQFCQPEKTMARVLGVGAYGKVFDLDKVAIKTANEDESVISAFIAGVIRAKSGADLLSHECVINNLLISNSVCMSHKVSLSRTYDIDLHKFEDWDVRNVMNYYSVFCKLADAVRFLNLKCRINHFDISPMNIFLNHKKEIIFDAVLADYSLSEMHPNYNGTCAIAKEYDKNLQLVPISRNKFCDMFNPGFRPLVANAMILVNVCGAFDGENNPLRHCNLDLCAFAQVVLSCVLRMTDKRGCREAQLYYEKRLFALANEACRLNPLKYPFAYRDACCKVLAEHVVLLGLLFYRDVVEIYEKLYDFLDERGEFGSRDLFEATFLNNSKLTRRQPIREGLASLQSSEYGEKLLHDLRELFLINSTADLDKDTSSLFHM.

The span at 1–16 (MDNGVETPQGQKTQPI) shows a compositional bias: polar residues. The segment at 1 to 32 (MDNGVETPQGQKTQPINLPPVRKKLRKHEGLG) is disordered. ATP contacts are provided by residues 201 to 209 (LGVGAYGKV) and Lys-218. The Proton acceptor role is filled by Asp-313.

It belongs to the protein kinase superfamily. Tyr protein kinase family. HCMV ganciclovir subfamily.

Its function is as follows. Phosphorylates the antiviral nucleoside analog ganciclovir. The chain is Probable ganciclovir kinase (U69) from Homo sapiens (Human).